We begin with the raw amino-acid sequence, 184 residues long: MSRAWYVVQTYSQYEKKIEQDIRLLINEGVFGGVVLDVKAPIEKVEEIRNGKKRIRERKIWPGYILIELDLPEVGWKDIIANIIKVQGVINFVGVSKGQRPIPINDEEVKSVFMLTGEIKANKSIFMLYDFEEGERVRIKGGPFDSFEGLISSIDYERKKLKVAVQIFGRSTPVEVDFQHIEKI.

Belongs to the NusG family.

Participates in transcription elongation, termination and antitermination. The sequence is that of Transcription termination/antitermination protein NusG from Borreliella burgdorferi (strain ATCC 35210 / DSM 4680 / CIP 102532 / B31) (Borrelia burgdorferi).